The following is a 421-amino-acid chain: UV-B-induced protein At3g17800, chloroplastic (421 aa).

2 disordered regions span residues 1–40 (MDAL…RSGS) and 74–95 (VRAS…IAPL). The transit peptide at 1–75 (MDALTSSLVR…AKTRRSFVVR (75 aa)) directs the protein to the chloroplast. Positions 16–28 (SRTSDNGSGSMFL) are enriched in polar residues. Low complexity predominate over residues 74 to 88 (VRASSASNDASSGSS).

The protein localises to the plastid. It is found in the chloroplast. The protein is UV-B-induced protein At3g17800, chloroplastic of Arabidopsis thaliana (Mouse-ear cress).